Consider the following 1601-residue polypeptide: PH and SEC7 domain-containing protein (1601 aa).

Residues methionine 1–arginine 340 are mediates regulation of axon branching and microtubule organization. One can recognise a PDZ domain in the interval lysine 6 to proline 88. Disordered stretches follow at residues asparagine 113 to lysine 192, threonine 211 to alanine 322, serine 339 to asparagine 440, leucine 459 to glycine 657, asparagine 737 to alanine 780, glutamine 872 to cysteine 965, and glutamine 1040 to glutamate 1126. Residues histidine 118–histidine 128 are compositionally biased toward polar residues. Low complexity predominate over residues alanine 166–threonine 191. Over residues glutamine 283–threonine 297 the composition is skewed to polar residues. A compositionally biased stretch (basic and acidic residues) spans arginine 300–glutamate 311. Residues proline 323 to arginine 340 carry the Microtubule elimination domain (MTED); Binds tubulin and blocks microtubule polymerization motif. Residues serine 339–leucine 348 show a composition bias toward polar residues. Residues lysine 353 to proline 362 are compositionally biased toward basic and acidic residues. Low complexity-rich tracts occupy residues serine 382–aspartate 399, glutamine 409–glutamine 424, and glutamine 468–tyrosine 487. Residues glutamine 488 to glutamate 505 show a composition bias toward acidic residues. Positions tyrosine 510 to glutamine 519 are enriched in polar residues. Residues aspartate 526–tyrosine 557 are compositionally biased toward acidic residues. 2 stretches are compositionally biased toward polar residues: residues serine 558–alanine 567 and threonine 617–threonine 630. The span at serine 640–glycine 657 shows a compositional bias: low complexity. Residues asparagine 737–glycine 747 are compositionally biased toward polar residues. Composition is skewed to low complexity over residues asparagine 752–alanine 780, glutamine 872–glutamine 942, glycine 949–cysteine 965, and glutamine 1040–glutamine 1052. Residues serine 894 to lysine 1601 are mediates association to the membrane and rescricts the microtubule-inhibiting activity to the cell cortex. Residues glutamine 1053–valine 1071 show a composition bias toward basic and acidic residues. Residues valine 1125–lysine 1291 enclose the SEC7 domain. Residues valine 1332 to alanine 1445 form the PH domain. Positions leucine 1544 to lysine 1601 are disordered. Residues threonine 1568–asparagine 1579 show a composition bias toward polar residues.

The protein belongs to the PSD family. Interacts (via MTED motif) with tubulin. In terms of tissue distribution, expressed in the head (at protein level).

It is found in the cell projection. The protein localises to the axon. It localises to the cytoplasm. Its subcellular location is the cell membrane. The protein resides in the cell cortex. Functionally, guanine nucleotide exchange factor for Arf6. Regulates axon growth and branching by inhibiting microtubule polymerisation at the cortex. Together with shot, promotes axonal microtubule bundle integrity. Required for normal ethanol-induced tolerance and preference. Probably by activating Arf6, counteracts ethanol-induced sedation. This chain is PH and SEC7 domain-containing protein, found in Drosophila melanogaster (Fruit fly).